The primary structure comprises 209 residues: Probable GTP-binding protein EngB (209 aa).

The 177-residue stretch at 22 to 198 folds into the EngB-type G domain; that stretch reads TPLEIAFVGR…NRTVGSWLDA (177 aa). Positions 37 and 59 each coordinate Mg(2+).

This sequence belongs to the TRAFAC class TrmE-Era-EngA-EngB-Septin-like GTPase superfamily. EngB GTPase family. The cofactor is Mg(2+).

Necessary for normal cell division and for the maintenance of normal septation. This Neisseria meningitidis serogroup B (strain ATCC BAA-335 / MC58) protein is Probable GTP-binding protein EngB.